The following is a 423-amino-acid chain: MTNLEEIGARARAAGRRLALMPTERKNAALEAIAAALLDEANAAEVLAANADDVAAGRDAGLSPALIDRMTLTPQRLAAIAADTRTVAGLPDPVGERFDATVLENGLRVHKRRVPLGVVGVIYEARPNVTVDVAALCLKSGNAAILRGGKEITRSCAALTRLIQNALAQTGLPADAIQVIDNPDRALVEQLLRLDRYVDVIIPRGGAGLHRFCREKASIPVITGGIGVCHIYVDQAADLEMVVPIVHNAKVQRPSVCNALDTLLVHRAVAAEMLPAVARDLLASNVELRVDEEAMALLRAAGFDTPQIVPAQESDFGVEFMALILSIRVVAGLDEALEHIARFGDHSDAIITRDPATAEAFVQAVDSSAVFVNASTRFNDGGQLGLGAEIAISTQKLHARGPMALRELTSYKWVVEGDGHVRA.

Belongs to the gamma-glutamyl phosphate reductase family.

It localises to the cytoplasm. The catalysed reaction is L-glutamate 5-semialdehyde + phosphate + NADP(+) = L-glutamyl 5-phosphate + NADPH + H(+). It participates in amino-acid biosynthesis; L-proline biosynthesis; L-glutamate 5-semialdehyde from L-glutamate: step 2/2. Catalyzes the NADPH-dependent reduction of L-glutamate 5-phosphate into L-glutamate 5-semialdehyde and phosphate. The product spontaneously undergoes cyclization to form 1-pyrroline-5-carboxylate. This is Gamma-glutamyl phosphate reductase from Roseiflexus castenholzii (strain DSM 13941 / HLO8).